The primary structure comprises 1364 residues: Formin-like protein 6 (1364 aa).

A Phosphatase tensin-type domain is found at 9 to 193; that stretch reads YRKPPDGLLE…HYISRRNVSA (185 aa). The Phosphocysteine intermediate role is filled by C126. One can recognise a C2 tensin-type domain in the interval 199–338; that stretch reads DRALTLDCVI…FRAEVLFSEM (140 aa). 3 disordered regions span residues 614 to 934, 976 to 999, and 1317 to 1364; these read KCTP…NLKP, VLPSSDGKRSDKSGSRASGSKPEK, and EAEA…ASAK. A compositionally biased stretch (pro residues) spans 617 to 631; the sequence is PSPPPLLPPLAPVVP. Residues 657 to 690 show a composition bias toward polar residues; the sequence is SFPSLSPTQQKQSTSKLCQTILPTNHQLSSSNIT. Positions 734-743 are enriched in pro residues; it reads PPAPPPPPLQ. The span at 744–757 shows a compositional bias: low complexity; sequence SPSTPRCSPVRTLA. Composition is skewed to pro residues over residues 774–813 and 856–865; these read GPPPPPPPPAPNSCPSRPAPPPPPPPPLASTSSPPRPAAP and PSPPPPPPPC. A compositionally biased stretch (polar residues) spans 916 to 929; it reads MSRSLQSGQAASRR. In terms of domain architecture, FH2 spans 922–1322; it reads SGQAASRRSN…KALKEAEAEK (401 aa). The segment covering 1317–1351 has biased composition (basic and acidic residues); it reads EAEAEKTKKEPENAQKTKEPGNDKAKHNNSIKELD. The segment covering 1353 to 1364 has biased composition (polar residues); sequence SLQSPAQTASAK.

Belongs to the formin-like family. Class-II subfamily.

In Oryza sativa subsp. japonica (Rice), this protein is Formin-like protein 6 (FH6).